The sequence spans 413 residues: ATP phosphoribosyltransferase 2, chloroplastic (413 aa).

The N-terminal 57 residues, Met-1–Val-57, are a transit peptide targeting the chloroplast.

It belongs to the ATP phosphoribosyltransferase family. Long subfamily. The cofactor is Mg(2+).

It localises to the plastid. It is found in the chloroplast. It carries out the reaction 1-(5-phospho-beta-D-ribosyl)-ATP + diphosphate = 5-phospho-alpha-D-ribose 1-diphosphate + ATP. It participates in amino-acid biosynthesis; L-histidine biosynthesis; L-histidine from 5-phospho-alpha-D-ribose 1-diphosphate: step 1/9. Its activity is regulated as follows. Feedback inhibited by L-histidine. In terms of biological role, catalyzes the condensation of ATP and 5-phosphoribose 1-diphosphate to form N'-(5'-phosphoribosyl)-ATP (PR-ATP). This chain is ATP phosphoribosyltransferase 2, chloroplastic (HISN1B), found in Arabidopsis thaliana (Mouse-ear cress).